The primary structure comprises 325 residues: UPF0164 protein TP_0856 (325 aa).

An N-terminal signal peptide occupies residues 1-28 (MVHYKSVFYKSAALVCGFVLAGASVAIA).

The protein belongs to the UPF0164 family.

This chain is UPF0164 protein TP_0856, found in Treponema pallidum (strain Nichols).